Consider the following 182-residue polypeptide: Adenine phosphoribosyltransferase (182 aa).

The protein belongs to the purine/pyrimidine phosphoribosyltransferase family. Homodimer.

The protein resides in the cytoplasm. The enzyme catalyses AMP + diphosphate = 5-phospho-alpha-D-ribose 1-diphosphate + adenine. The protein operates within purine metabolism; AMP biosynthesis via salvage pathway; AMP from adenine: step 1/1. In terms of biological role, catalyzes a salvage reaction resulting in the formation of AMP, that is energically less costly than de novo synthesis. The polypeptide is Adenine phosphoribosyltransferase (Pseudomonas paraeruginosa (strain DSM 24068 / PA7) (Pseudomonas aeruginosa (strain PA7))).